The following is a 274-amino-acid chain: Ribosomal RNA small subunit methyltransferase A (274 aa).

Residues Asn26, Leu28, Gly53, Glu74, Asp94, and Asn114 each contribute to the S-adenosyl-L-methionine site.

Belongs to the class I-like SAM-binding methyltransferase superfamily. rRNA adenine N(6)-methyltransferase family. RsmA subfamily.

It is found in the cytoplasm. It carries out the reaction adenosine(1518)/adenosine(1519) in 16S rRNA + 4 S-adenosyl-L-methionine = N(6)-dimethyladenosine(1518)/N(6)-dimethyladenosine(1519) in 16S rRNA + 4 S-adenosyl-L-homocysteine + 4 H(+). In terms of biological role, specifically dimethylates two adjacent adenosines (A1518 and A1519) in the loop of a conserved hairpin near the 3'-end of 16S rRNA in the 30S particle. May play a critical role in biogenesis of 30S subunits. This Bdellovibrio bacteriovorus (strain ATCC 15356 / DSM 50701 / NCIMB 9529 / HD100) protein is Ribosomal RNA small subunit methyltransferase A.